Here is a 145-residue protein sequence, read N- to C-terminus: 3-hydroxyacyl-[acyl-carrier-protein] dehydratase FabZ (145 aa).

Histidine 47 is an active-site residue.

The protein belongs to the thioester dehydratase family. FabZ subfamily.

The protein resides in the cytoplasm. It carries out the reaction a (3R)-hydroxyacyl-[ACP] = a (2E)-enoyl-[ACP] + H2O. Functionally, involved in unsaturated fatty acids biosynthesis. Catalyzes the dehydration of short chain beta-hydroxyacyl-ACPs and long chain saturated and unsaturated beta-hydroxyacyl-ACPs. The sequence is that of 3-hydroxyacyl-[acyl-carrier-protein] dehydratase FabZ from Acidovorax sp. (strain JS42).